A 179-amino-acid polypeptide reads, in one-letter code: Ubiquitin-conjugating enzyme E2 C (179 aa).

The tract at residues 1–31 (MASQNRDPAATSVAAARKGAEPSGGAARGPV) is disordered. A2 is modified (N-acetylalanine). Position 3 is a phosphoserine (S3). The 146-residue stretch at 30–175 (PVGKRLQQEL…LQETYSKQVT (146 aa)) folds into the UBC core domain. C114 acts as the Glycyl thioester intermediate in catalysis.

This sequence belongs to the ubiquitin-conjugating enzyme family. Component of the APC/C complex, composed of at least 14 distinct subunits that assemble into a complex of at least 19 chains with a combined molecular mass of around 1.2 MDa. Within this complex, directly interacts with ANAPC2. Post-translationally, autoubiquitinated by the APC/C complex, leading to its degradation by the proteasome. Its degradation plays a central role in APC/C regulation, allowing cyclin-A accumulation before S phase entry. APC/C substrates inhibit the autoubiquitination of UBE2C/UBCH10 but not its E2 function, hence APC/C remaining active until its substrates have been destroyed.

It carries out the reaction S-ubiquitinyl-[E1 ubiquitin-activating enzyme]-L-cysteine + [E2 ubiquitin-conjugating enzyme]-L-cysteine = [E1 ubiquitin-activating enzyme]-L-cysteine + S-ubiquitinyl-[E2 ubiquitin-conjugating enzyme]-L-cysteine.. It catalyses the reaction S-ubiquitinyl-[E1 ubiquitin-activating enzyme]-L-cysteine + [acceptor protein]-L-lysine = [E1 ubiquitin-activating enzyme]-L-cysteine + N(6)-monoubiquitinyl-[acceptor protein]-L-lysine.. The protein operates within protein modification; protein ubiquitination. Its function is as follows. Accepts ubiquitin from the E1 complex and catalyzes its covalent attachment to other proteins. In vitro catalyzes 'Lys-11'- and 'Lys-48'-linked polyubiquitination. Acts as an essential factor of the anaphase promoting complex/cyclosome (APC/C), a cell cycle-regulated ubiquitin ligase that controls progression through mitosis. Acts by initiating 'Lys-11'-linked polyubiquitin chains on APC/C substrates, leading to the degradation of APC/C substrates by the proteasome and promoting mitotic exit. The chain is Ubiquitin-conjugating enzyme E2 C (UBE2C) from Homo sapiens (Human).